A 695-amino-acid chain; its full sequence is Segment polarity protein dishevelled homolog DVL-1 (695 aa).

Residues 1 to 85 (MAETKIIYHM…RVVSWLVLAE (85 aa)) enclose the DIX domain. A disordered region spans residues 89–236 (SDAGSQGTDS…RLRQTDRASS (148 aa)). Basic residues predominate over residues 142–151 (SHRRERARRR). Residues 152–171 (NRDEAARTNGHPRGDRRREL) show a composition bias toward basic and acidic residues. Low complexity predominate over residues 177–192 (SASTVLSSELESSSFI). Ser194 bears the Phosphoserine mark. The span at 201–214 (SRLSSSTEQSTSSR) shows a compositional bias: low complexity. Positions 215 to 228 (LIRKHKCRRRKQRL) are enriched in basic residues. A PDZ domain is found at 251–323 (TVTLNMERHH…NDDAVRVLRE (73 aa)). One can recognise a DEP domain in the interval 425 to 499 (PDSGLEIRDR…SEQCYYVFGD (75 aa)). Positions 551-580 (PAYQDPGFSYGSGSAGSQQSEGSKSSGSTR) are enriched in low complexity. A disordered region spans residues 551–641 (PAYQDPGFSY…SQASAVAPGL (91 aa)). Residues 622-635 (SQLSRGSSPRSQAS) are compositionally biased toward polar residues.

This sequence belongs to the DSH family. Interacts with BRD7 and INVS. Interacts (via PDZ domain) with the VANGL1 and VANGL2 (via C-terminus). Interacts (via PDZ domain) with NXN. Interacts with CXXC4. Interacts with ARRB1; the interaction is enhanced by phosphorylation of DVL1. Interacts with CYLD. Interacts (via PDZ domain) with RYK. Self-associates (via DIX domain) and forms higher homooligomers. Interacts (via PDZ domain) with DACT1 and FZD7, where DACT1 and FZD7 compete for the same binding site. Interacts (via DEP domain) with MUSK; the interaction is direct and mediates the formation a DVL1, MUSK and PAK1 ternary complex involved in AChR clustering. Interacts (via PDZ domain) with TMEM88. Interacts with DCDC2. Interacts with FOXK2. Interacts with PKD1 (via extracellular domain). Interacts (via PDZ domain) with CCDC88C/DAPLE; competes with CCDC88C for binding to frizzled receptor FZD7 and dissociates from CCDC88C following initiation of non-canonical Wnt signaling when CCDC88C displaces DVL1 from ligand-activated FZD7. Ubiquitinated; undergoes both 'Lys-48'-linked ubiquitination, leading to its subsequent degradation by the ubiquitin-proteasome pathway, and 'Lys-63'-linked ubiquitination. The interaction with INVS is required for ubiquitination. Deubiquitinated by CYLD, which acts on 'Lys-63'-linked ubiquitin chains.

The protein localises to the cell membrane. The protein resides in the cytoplasm. Its subcellular location is the cytosol. It localises to the cytoplasmic vesicle. In terms of biological role, participates in Wnt signaling by binding to the cytoplasmic C-terminus of frizzled family members and transducing the Wnt signal to down-stream effectors. Plays a role both in canonical and non-canonical Wnt signaling. Plays a role in the signal transduction pathways mediated by multiple Wnt genes. Required for LEF1 activation upon WNT1 and WNT3A signaling. DVL1 and PAK1 form a ternary complex with MUSK which is important for MUSK-dependent regulation of AChR clustering during the formation of the neuromuscular junction (NMJ). The polypeptide is Segment polarity protein dishevelled homolog DVL-1 (Dvl1) (Rattus norvegicus (Rat)).